Reading from the N-terminus, the 85-residue chain is Electron transfer flavoprotein regulatory factor 1 homolog (85 aa).

The protein belongs to the complex I LYR family. Highly expressed in the larval fat body.

The protein localises to the mitochondrion. Functionally, acts as a regulator of the electron transfer flavoprotein by promoting the removal of flavin from the ETF holoenzyme. May act with the ETF complex to coordinate lipid homeostasis in the fat body in response to stage-specific demands. In Drosophila melanogaster (Fruit fly), this protein is Electron transfer flavoprotein regulatory factor 1 homolog.